Here is a 92-residue protein sequence, read N- to C-terminus: Small ribosomal subunit protein uS19 (92 aa).

Belongs to the universal ribosomal protein uS19 family.

Functionally, protein S19 forms a complex with S13 that binds strongly to the 16S ribosomal RNA. The protein is Small ribosomal subunit protein uS19 of Legionella pneumophila (strain Paris).